The primary structure comprises 532 residues: FRIGIDA-like protein 4a (532 aa).

Positions 406 to 432 (KTEKRKPAAVPANKRTRASYNGPMPPA) are disordered.

It belongs to the Frigida family. In terms of tissue distribution, expressed in leaves, shoot apex, flowers and during seed development.

In Arabidopsis thaliana (Mouse-ear cress), this protein is FRIGIDA-like protein 4a (FRL4A).